Reading from the N-terminus, the 54-residue chain is IVTVDCSDYPRPVCTLDYMPLCGSDNKTYSNKCNFCNAVVDSNGTITLSHFGRC.

The Kazal-like domain maps to 4–54 (VDCSDYPRPVCTLDYMPLCGSDNKTYSNKCNFCNAVVDSNGTITLSHFGRC). 3 cysteine pairs are disulfide-bonded: Cys-6–Cys-36, Cys-14–Cys-33, and Cys-22–Cys-54. Asn-43 carries an N-linked (GlcNAc...) asparagine glycan.

The protein localises to the secreted. The chain is Ovomucoid from Corvus albus (Pied crow).